Reading from the N-terminus, the 459-residue chain is Argininosuccinate lyase (459 aa).

This sequence belongs to the lyase 1 family. Argininosuccinate lyase subfamily.

The protein resides in the cytoplasm. The enzyme catalyses 2-(N(omega)-L-arginino)succinate = fumarate + L-arginine. The protein operates within amino-acid biosynthesis; L-arginine biosynthesis; L-arginine from L-ornithine and carbamoyl phosphate: step 3/3. In Bacillus licheniformis (strain ATCC 14580 / DSM 13 / JCM 2505 / CCUG 7422 / NBRC 12200 / NCIMB 9375 / NCTC 10341 / NRRL NRS-1264 / Gibson 46), this protein is Argininosuccinate lyase.